Here is a 173-residue protein sequence, read N- to C-terminus: Archaemetzincin (173 aa).

A Zn(2+)-binding site is contributed by His-130. Glu-131 functions as the Proton acceptor in the catalytic mechanism. Zn(2+) contacts are provided by His-134, His-140, Cys-141, Cys-146, Cys-165, and Cys-168.

This sequence belongs to the peptidase M54 family. In terms of assembly, monomer. Zn(2+) serves as cofactor.

In terms of biological role, probable zinc metalloprotease whose natural substrate is unknown. This Haloquadratum walsbyi (strain DSM 16790 / HBSQ001) protein is Archaemetzincin.